The primary structure comprises 364 residues: Fructose-bisphosphate aldolase A (364 aa).

Residue tyrosine 5 is modified to Phosphotyrosine. A Phosphothreonine modification is found at threonine 9. Phosphoserine is present on residues serine 36 and serine 39. An N6-acetyllysine; alternate modification is found at lysine 42. Lysine 42 participates in a covalent cross-link: Glycyl lysine isopeptide (Lys-Gly) (interchain with G-Cter in SUMO1); alternate. Lysine 42 is covalently cross-linked (Glycyl lysine isopeptide (Lys-Gly) (interchain with G-Cter in SUMO2); alternate). Arginine 43 is a beta-D-fructose 1,6-bisphosphate binding site. Serine 46 carries the post-translational modification Phosphoserine. Lysine 99 bears the N6-(2-hydroxyisobutyryl)lysine mark. At lysine 108 the chain carries N6-acetyllysine. Position 111 is an N6-acetyllysine; alternate (lysine 111). An N6-malonyllysine; alternate modification is found at lysine 111. Serine 132 carries the post-translational modification Phosphoserine. Lysine 147 is modified (N6-(2-hydroxyisobutyryl)lysine). Glutamate 188 serves as the catalytic Proton acceptor. The active-site Schiff-base intermediate with dihydroxyacetone-P is lysine 230. Phosphoserine is present on serine 272. Beta-D-fructose 1,6-bisphosphate is bound by residues 272–274, serine 301, and arginine 304; that span reads SGG. An N6-malonyllysine modification is found at lysine 312. Position 330 is an N6-acetyllysine (lysine 330).

It belongs to the class I fructose-bisphosphate aldolase family. As to quaternary structure, homotetramer. Interacts with SNX9 and WAS. Interacts with FBP2; the interaction blocks FBP2 inhibition by physiological concentrations of AMP and reduces inhibition by Ca(2+).

The protein resides in the cytoplasm. It is found in the myofibril. It localises to the sarcomere. The protein localises to the i band. Its subcellular location is the m line. It carries out the reaction beta-D-fructose 1,6-bisphosphate = D-glyceraldehyde 3-phosphate + dihydroxyacetone phosphate. It functions in the pathway carbohydrate degradation; glycolysis; D-glyceraldehyde 3-phosphate and glycerone phosphate from D-glucose: step 4/4. Functionally, catalyzes the reversible conversion of beta-D-fructose 1,6-bisphosphate (FBP) into two triose phosphate and plays a key role in glycolysis and gluconeogenesis. In addition, may also function as scaffolding protein. The sequence is that of Fructose-bisphosphate aldolase A from Homo sapiens (Human).